The chain runs to 900 residues: Sterol regulatory element-binding protein 1 (900 aa).

Residues 1–16 (MQSSIPSVSVSVASPA) show a composition bias toward low complexity. Disordered regions lie at residues 1–49 (MQSS…TKAS) and 206–263 (TTCK…PKKT). A nuclear form of sre1; complements deletions of sre1 or scp1 region spans residues 1 to 440 (MQSSIPSVSV…FALPPFLMSP (440 aa)). The Cytoplasmic portion of the chain corresponds to 1–442 (MQSSIPSVSV…LPPFLMSPFT (442 aa)). Polar residues predominate over residues 21 to 32 (TKASPDSKSPNS). Residues 35–49 (AIPSSSPLASSTKAS) show a composition bias toward low complexity. The bHLH domain maps to 260–332 (PKKTAHNMIE…AKATEYIRHL (73 aa)). Residues 443 to 463 (GTVLFNMLKIGVVLLGLFYLL) form a helical membrane-spanning segment. At 464–509 (HDNSLFKGFKGEKKSKVSTRSSMSPSSILFRKTVFEKYCLLDHSTS) the chain is on the lumenal side. A helical transmembrane segment spans residues 510–530 (TISLFFGLLIFTLKSAYGYLT). Topologically, residues 531–900 (HRLSALYTSS…QEDLGYVSSA (370 aa)) are cytoplasmic. Phosphoserine occurs at positions 898 and 899.

As to quaternary structure, forms a tight complex with scp1, composed of 4 copies of scp1 and 4 copies of sre1, which protects sre1 precursor from degradation by the proteasome. In low oxygen or sterol conditions, undergoes proteolytic cleavage by rhomboid-type protease rbd2 and is released as soluble transcription factor from the membrane. Post-translationally, processed form is phosphorylated.

It is found in the endoplasmic reticulum membrane. The protein resides in the nucleus. Its function is as follows. Precursor of the transcription factor form (Processed sterol regulatory element-binding protein 1), which is embedded in the endoplasmic reticulum membrane. Low oxygen or sterol conditions promote processing of this form, releasing the transcription factor form that translocates into the nucleus and activates transcription of genes required for adaptation to anaerobic growth. In terms of biological role, transcriptional activator required for transcription of genes required for adaptation to anaerobic growth like those implicated in the nonrespiratory oxygen-consumptive biosynthetic pathways of sterol, heme, sphingolipid, and ubiquinone biosynthesis. May monitor oxygen levels through sterol synthesis steps which require oxygen. The sequence is that of Sterol regulatory element-binding protein 1 from Schizosaccharomyces pombe (strain 972 / ATCC 24843) (Fission yeast).